The chain runs to 74 residues: EMBRYO SURROUNDING FACTOR 1-like protein 4 (74 aa).

Residues 1 to 22 (MKSSHAYLVCILLLSLFSLHQC) form the signal peptide. 4 disulfides stabilise this stretch: Cys-36–Cys-51, Cys-41–Cys-70, Cys-49–Cys-66, and Cys-52–Cys-59.

This sequence belongs to the MEG family. As to expression, expressed in flowers.

This is EMBRYO SURROUNDING FACTOR 1-like protein 4 (ESFL4) from Arabidopsis thaliana (Mouse-ear cress).